The primary structure comprises 762 residues: Ribosome-releasing factor 2, mitochondrial (762 aa).

Residues 1-35 (MLLSLTFPVLRGCTGHLVNRSLQAPRWRVTWKRSY) constitute a mitochondrion transit peptide. Residues 54 to 341 (SKIRNIGIMA…AITAYLPAPN (288 aa)) form the tr-type G domain. Residues 63-70 (AHIDAGKT), 127-131 (DTPGH), and 181-184 (NKMD) contribute to the GTP site.

The protein belongs to the TRAFAC class translation factor GTPase superfamily. Classic translation factor GTPase family. EF-G/EF-2 subfamily.

It localises to the mitochondrion. The catalysed reaction is GTP + H2O = GDP + phosphate + H(+). Mitochondrial GTPase that mediates the disassembly of ribosomes from messenger RNA at the termination of mitochondrial protein biosynthesis. Acts in collaboration with mrrf. GTP hydrolysis follows the ribosome disassembly and probably occurs on the ribosome large subunit. Not involved in the GTP-dependent ribosomal translocation step during translation elongation. The polypeptide is Ribosome-releasing factor 2, mitochondrial (gfm2) (Danio rerio (Zebrafish)).